The sequence spans 128 residues: Large ribosomal subunit protein bL17 (128 aa).

It belongs to the bacterial ribosomal protein bL17 family. In terms of assembly, part of the 50S ribosomal subunit. Contacts protein L32.

The sequence is that of Large ribosomal subunit protein bL17 from Pseudomonas syringae pv. syringae (strain B728a).